The chain runs to 229 residues: Lipoprotein-releasing system ATP-binding protein LolD (229 aa).

Positions 9-228 constitute an ABC transporter domain; the sequence is HGLRKIYREA…QDGNLVQVEV (220 aa). 42–49 lines the ATP pocket; that stretch reads GSSGSGKS.

It belongs to the ABC transporter superfamily. Lipoprotein translocase (TC 3.A.1.125) family. In terms of assembly, the complex is composed of two ATP-binding proteins (LolD) and two transmembrane proteins (LolC and LolE).

The protein resides in the cell inner membrane. Part of the ABC transporter complex LolCDE involved in the translocation of mature outer membrane-directed lipoproteins, from the inner membrane to the periplasmic chaperone, LolA. Responsible for the formation of the LolA-lipoprotein complex in an ATP-dependent manner. The chain is Lipoprotein-releasing system ATP-binding protein LolD from Photobacterium profundum (strain SS9).